Here is a 382-residue protein sequence, read N- to C-terminus: Chaperone protein DnaJ (382 aa).

In terms of domain architecture, J spans 5–70 (DYYDLLGLSK…DKRAAYDRYG (66 aa)). Residues 138–216 (GTKVPINYVT…CSGSGRVRDE (79 aa)) form a CR-type zinc finger. Positions 151, 154, 168, 171, 190, 193, 204, and 207 each coordinate Zn(2+). 4 CXXCXGXG motif repeats span residues 151–158 (CSSCSGSG), 168–175 (CNTCHGAG), 190–197 (CHVCNGEG), and 204–211 (CKKCSGSG).

Belongs to the DnaJ family. Homodimer. It depends on Zn(2+) as a cofactor.

The protein localises to the cytoplasm. In terms of biological role, participates actively in the response to hyperosmotic and heat shock by preventing the aggregation of stress-denatured proteins and by disaggregating proteins, also in an autonomous, DnaK-independent fashion. Unfolded proteins bind initially to DnaJ; upon interaction with the DnaJ-bound protein, DnaK hydrolyzes its bound ATP, resulting in the formation of a stable complex. GrpE releases ADP from DnaK; ATP binding to DnaK triggers the release of the substrate protein, thus completing the reaction cycle. Several rounds of ATP-dependent interactions between DnaJ, DnaK and GrpE are required for fully efficient folding. Also involved, together with DnaK and GrpE, in the DNA replication of plasmids through activation of initiation proteins. This is Chaperone protein DnaJ from Ehrlichia ruminantium (strain Gardel).